The following is a 938-amino-acid chain: MSDYKNTLNLPETGFPMRGDLAKREPDMLKRWYEQDLYGIIRTAKKGKKTFILHDGPPYANGNIHIGHSVNKILKDIIVKAKGMSGYDSPYIPGWDCHGLPIELKVEQLIGKPGEKVSAAEFRAACRKYAAEQVEGQKKDFIRLGVLGDWDHPYLTMDFKTEANIIRALSKIIDNAHLHKGAKPVHWCTDCGSSLAEAEVEYYDKTSPSIDVRFNAVDVATVSAKFGAANANGPISLVIWTTTPWTLPANRAISLNAEYNYQLVQVEGECLILAEDLVESVMKRAGIAEWTVLGSCKGSDLELLRFNHPFMGFDVPAILGDHVTLDAGTGAVHTAPGHGPDDFVIGQKYGLEVANPVGPNGCYLAGTYPTLDGLFVFKANDVIVELLREKGALLKVEKLVHSYPCCWRHKTPIIFRATPQWFISMDQKGLRKQSLEEIKGVQWIPDWGQARIETMVANRPDWCISRQRTWGVPMSLFVHKETEALHPRSTELMEEVAKRVEQDGIQAWWDLDPAEILGADAADYVKVPDTLDVWFDSGSTHSSVVDARPEFGGHSPDMYLEGSDQHRGWFMSSLMIATAMKGKAPYRQVLTHGFTVDGQGRKMSKSIGNTISPQDVMNKLGGDILRLWVASTDYTGEIAVSDEILKRSADSYRRIRNTARFLLANLNGFDPALHQVKPEEMVVVDRWAVGRAQAAQAEIMEAYENYDFHLVVQRLMQFCSVEMGSFYLDIIKDRQYTAKGDSVARRSCQTALFHIAEALVRWMAPIMSFTADEIWNEMPGERPQYVFTEEWYDGLFGLAGDESMNDTFWAELLKVRGEVNKVLEQARSDKRIGGSLEAAVTLFATPELAARLNSLQDELRFVLLTSAAKVADYADAGDDALQSELISGLKITFNKADGEKCPRCWHYTQDIGLVAEHAELCGRCVTNVAGDGEERKYA.

A 'HIGH' region motif is present at residues 58–68 (PYANGNIHIGH). Residue glutamate 561 coordinates L-isoleucyl-5'-AMP. A 'KMSKS' region motif is present at residues 602–606 (KMSKS). Position 605 (lysine 605) interacts with ATP. Residues cysteine 901, cysteine 904, cysteine 921, and cysteine 924 each coordinate Zn(2+).

The protein belongs to the class-I aminoacyl-tRNA synthetase family. IleS type 1 subfamily. Monomer. Requires Zn(2+) as cofactor.

It localises to the cytoplasm. It catalyses the reaction tRNA(Ile) + L-isoleucine + ATP = L-isoleucyl-tRNA(Ile) + AMP + diphosphate. Its function is as follows. Catalyzes the attachment of isoleucine to tRNA(Ile). As IleRS can inadvertently accommodate and process structurally similar amino acids such as valine, to avoid such errors it has two additional distinct tRNA(Ile)-dependent editing activities. One activity is designated as 'pretransfer' editing and involves the hydrolysis of activated Val-AMP. The other activity is designated 'posttransfer' editing and involves deacylation of mischarged Val-tRNA(Ile). In Yersinia enterocolitica serotype O:8 / biotype 1B (strain NCTC 13174 / 8081), this protein is Isoleucine--tRNA ligase.